The following is a 148-amino-acid chain: Small ribosomal subunit protein eS19 (148 aa).

This sequence belongs to the eukaryotic ribosomal protein eS19 family. In terms of assembly, part of the 30S ribosomal subunit.

In terms of biological role, may be involved in maturation of the 30S ribosomal subunit. The polypeptide is Small ribosomal subunit protein eS19 (Methanocaldococcus jannaschii (strain ATCC 43067 / DSM 2661 / JAL-1 / JCM 10045 / NBRC 100440) (Methanococcus jannaschii)).